Consider the following 1004-residue polypeptide: Putative helicase MOV-10 (1004 aa).

Lys-148 bears the N6-acetyllysine mark. Thr-254 is modified (phosphothreonine). Position 433 is a phosphoserine (Ser-433). 525 to 532 (GPPGTGKT) is an ATP binding site. The short motif at 646 to 649 (DEAG) is the DEAG box element. The interval 922-966 (NPLLLGHDPDWKTFLEFCKENGGYTGCPFPAKLDLQQGQDLLQGL) is interaction with AGO2 and APOBEC3G. The tract at residues 966-1004 (LSKLSPSTSGPRRHQNLPQEREGEGGLPLQVEPEWRNEL) is disordered. Phosphoserine is present on Ser-970.

Belongs to the DNA2/NAM7 helicase family. SDE3 subfamily. Interacts with DICER1, AGO2, TARBP2, EIF6 and RPL7A (60S ribosome subunit); they form a large RNA-induced silencing complex (RISC). Interacts with APOBEC3G in an RNA-dependent manner. Interacts with TRIM71 (via NHL repeats) in an RNA-dependent manner. Interacts with both protein products of LIRE1, ORF1p and ORF2p. Interacts with TUT4 and, to a lesser extent, TUT7; the interactions are RNA-dependent. Interacts with AGO2, TNRC6B and UPF1; the interactions are direct and RNA-dependent. Interacts with FMR1; this interaction is direct, occurs in an RNA-dependent manner on polysomes and induces association of MOV10 with RNAs. Interacts with SHFL; the interaction increases in presence of RNA. Interacts with DHX34; the interaction is RNA-independent. Interacts with RBM46. Post-translationally, ubiquitinated by the DCX(DCAF12) complex that specifically recognizes the glutamate-leucine (Glu-Leu) degron at the C-terminus, leading to its degradation.

Its subcellular location is the cytoplasm. The protein resides in the P-body. It localises to the nucleus. The protein localises to the cytoplasmic ribonucleoprotein granule. It is found in the stress granule. It catalyses the reaction ATP + H2O = ADP + phosphate + H(+). 5' to 3' RNA helicase that is involved in a number of cellular roles ranging from mRNA metabolism and translation, modulation of viral infectivity, inhibition of retrotransposition, or regulation of synaptic transmission. Plays an important role in innate antiviral immunity by promoting type I interferon production. Mechanistically, specifically uses IKKepsilon/IKBKE as the mediator kinase for IRF3 activation. Contributes to UPF1 mRNA target degradation by translocation along 3' UTRs. Required for microRNA (miRNA)-mediated gene silencing by the RNA-induced silencing complex (RISC). Required for both miRNA-mediated translational repression and miRNA-mediated cleavage of complementary mRNAs by RISC. In cooperation with FMR1, regulates miRNA-mediated translational repression by AGO2. Restricts retrotransposition of long interspersed element-1 (LINE-1) in cooperation with TUT4 and TUT7 counteracting the RNA chaperonne activity of L1RE1. Facilitates LINE-1 uridylation by TUT4 and TUT7. Required for embryonic viability and for normal central nervous system development and function. Plays two critical roles in early brain development: suppresses retroelements in the nucleus by directly inhibiting cDNA synthesis, while regulates cytoskeletal mRNAs to influence neurite outgrowth in the cytosol. May function as a messenger ribonucleoprotein (mRNP) clearance factor. The chain is Putative helicase MOV-10 (Mov10) from Mus musculus (Mouse).